We begin with the raw amino-acid sequence, 333 residues long: uncharacterized protein (333 aa).

A Fe/B12 periplasmic-binding domain is found at 45-318 (NVIVSDSMFI…EYVKIIHPKI (274 aa)).

This is an uncharacterized protein from Methanocaldococcus jannaschii (strain ATCC 43067 / DSM 2661 / JAL-1 / JCM 10045 / NBRC 100440) (Methanococcus jannaschii).